Consider the following 287-residue polypeptide: ATP synthase gamma chain (287 aa).

The protein belongs to the ATPase gamma chain family. F-type ATPases have 2 components, CF(1) - the catalytic core - and CF(0) - the membrane proton channel. CF(1) has five subunits: alpha(3), beta(3), gamma(1), delta(1), epsilon(1). CF(0) has three main subunits: a, b and c.

It is found in the cell inner membrane. Produces ATP from ADP in the presence of a proton gradient across the membrane. The gamma chain is believed to be important in regulating ATPase activity and the flow of protons through the CF(0) complex. The polypeptide is ATP synthase gamma chain (Baumannia cicadellinicola subsp. Homalodisca coagulata).